The primary structure comprises 326 residues: Probable cell division protein WhiA (326 aa).

A DNA-binding region (H-T-H motif) is located at residues 275–308; sequence SLDELGHHADPPMTKDAVAGRIRRLLAMADKKAV.

The protein belongs to the WhiA family.

Its function is as follows. Involved in cell division and chromosome segregation. The chain is Probable cell division protein WhiA from Clavibacter michiganensis subsp. michiganensis (strain NCPPB 382).